Here is a 184-residue protein sequence, read N- to C-terminus: Large ribosomal subunit protein uL6 (184 aa).

It belongs to the universal ribosomal protein uL6 family. Part of the 50S ribosomal subunit.

Functionally, this protein binds to the 23S rRNA, and is important in its secondary structure. It is located near the subunit interface in the base of the L7/L12 stalk, and near the tRNA binding site of the peptidyltransferase center. The protein is Large ribosomal subunit protein uL6 of Thermococcus onnurineus (strain NA1).